The chain runs to 318 residues: Homoserine O-succinyltransferase (318 aa).

The active-site Acyl-thioester intermediate is Cys142. Residues Lys163 and Ser192 each coordinate substrate. The active-site Proton acceptor is His235. Residue Glu237 is part of the active site. Arg249 is a binding site for substrate.

Belongs to the MetA family.

It is found in the cytoplasm. It catalyses the reaction L-homoserine + succinyl-CoA = O-succinyl-L-homoserine + CoA. Its pathway is amino-acid biosynthesis; L-methionine biosynthesis via de novo pathway; O-succinyl-L-homoserine from L-homoserine: step 1/1. In terms of biological role, transfers a succinyl group from succinyl-CoA to L-homoserine, forming succinyl-L-homoserine. The protein is Homoserine O-succinyltransferase of Shewanella putrefaciens (strain CN-32 / ATCC BAA-453).